The sequence spans 109 residues: Mitochondrial pyruvate carrier 1 (109 aa).

Ala-2 carries the N-acetylalanine modification. Residues 2-20 (AGALVRKAADYVRSKDFRD) are Mitochondrial matrix-facing. A helical transmembrane segment spans residues 21–41 (YLMSTHFWGPVANWGLPIAAI). Residues 42–52 (NDMKKSPEIIS) are Mitochondrial intermembrane-facing. Residues 53 to 71 (GRMTFALCCYSLTFMRFAY) traverse the membrane as a helical segment. N6-acetyllysine is present on Lys-72. Topologically, residues 72-109 (KVQPRNWLLFACHATNEVAQLIQGGRLIKHEMTKTASA) are mitochondrial matrix.

The protein belongs to the mitochondrial pyruvate carrier (MPC) (TC 2.A.105) family. Homodimer. Forms heterodimer with MPC2. The heterodimer is the more stable and dominant form.

The protein localises to the mitochondrion inner membrane. The enzyme catalyses pyruvate(out) + H(+)(out) = pyruvate(in) + H(+)(in). Its function is as follows. Mediates the uptake of pyruvate into mitochondria. The chain is Mitochondrial pyruvate carrier 1 (MPC1) from Homo sapiens (Human).